Here is a 229-residue protein sequence, read N- to C-terminus: Enolase-phosphatase E1 (229 aa).

Positions 207 to 229 are disordered; it reads RDPASHHPQVQRFDDIHPEQIPA. Over residues 218 to 229 the composition is skewed to basic and acidic residues; that stretch reads RFDDIHPEQIPA.

The protein belongs to the HAD-like hydrolase superfamily. MasA/MtnC family. In terms of assembly, monomer. It depends on Mg(2+) as a cofactor.

It carries out the reaction 5-methylsulfanyl-2,3-dioxopentyl phosphate + H2O = 1,2-dihydroxy-5-(methylsulfanyl)pent-1-en-3-one + phosphate. It participates in amino-acid biosynthesis; L-methionine biosynthesis via salvage pathway; L-methionine from S-methyl-5-thio-alpha-D-ribose 1-phosphate: step 3/6. Its pathway is amino-acid biosynthesis; L-methionine biosynthesis via salvage pathway; L-methionine from S-methyl-5-thio-alpha-D-ribose 1-phosphate: step 4/6. Bifunctional enzyme that catalyzes the enolization of 2,3-diketo-5-methylthiopentyl-1-phosphate (DK-MTP-1-P) into the intermediate 2-hydroxy-3-keto-5-methylthiopentenyl-1-phosphate (HK-MTPenyl-1-P), which is then dephosphorylated to form the acireductone 1,2-dihydroxy-3-keto-5-methylthiopentene (DHK-MTPene). In Klebsiella pneumoniae (strain 342), this protein is Enolase-phosphatase E1.